The sequence spans 477 residues: Tripartite motif-containing protein 72 (477 aa).

Residues Cys14, Cys17, Cys29, His31, Cys34, Cys37, Cys53, Cys56, Cys86, His89, Cys97, Asp100, Cys105, Cys108, His114, and His117 each contribute to the Zn(2+) site. The RING-type zinc-finger motif lies at 14-57 (CPLCLQLFDAPVTAECGHSFCRACLSRVAGEPAADGTVNCPCCQ). The B box-type zinc-finger motif lies at 81–122 (VPQGHCEEHLDPLSIYCEQDRVLVCGVCASLGSHRGHRLLPA). Residues 135 to 232 (QQKLQLQEAS…EKVLEEVADK (98 aa)) adopt a coiled-coil conformation. A Phosphoserine modification is found at Ser255. One can recognise a B30.2/SPRY domain in the interval 271–475 (DFKFQVWRKM…PLLLVGPDGQ (205 aa)).

This sequence belongs to the TRIM/RBCC family. As to quaternary structure, homodimer. Homooligomer; disulfide-linked. Oligomerizes on the phospholipid membrane. Interacts with DYSF and CAV3. Disulfide bond formation at Cys-242 occurs in case of membrane damage that cause the entry of the oxidized milieu of the extracellular space, resulting in homooligomerization. Muscle-specific.

Its subcellular location is the cell membrane. The protein resides in the sarcolemma. It is found in the cytoplasmic vesicle membrane. It carries out the reaction S-ubiquitinyl-[E2 ubiquitin-conjugating enzyme]-L-cysteine + [acceptor protein]-L-lysine = [E2 ubiquitin-conjugating enzyme]-L-cysteine + N(6)-ubiquitinyl-[acceptor protein]-L-lysine.. It functions in the pathway protein modification; protein ubiquitination. Its activity is regulated as follows. Specifically binds phosphatidylserine. The binding to phospholipids enhances ubiquitination activity. Functionally, muscle-specific E3 ubiquitin-protein ligase that plays a central role in cell membrane repair by nucleating the assembly of the repair machinery at injury sites. Its ubiquitination activity is mediated by E2 ubiquitin-conjugating enzymes UBE2D1, UBE2D2 and UBE2D3. Acts as a sensor of oxidation: upon membrane damage, entry of extracellular oxidative environment results in disulfide bond formation and homooligomerization at the injury site. This oligomerization acts as a nucleation site for recruitment of TRIM72-containing vesicles to the injury site, leading to membrane patch formation. Probably acts upstream of the Ca(2+)-dependent membrane resealing process. Required for transport of DYSF to sites of cell injury during repair patch formation. Regulates membrane budding and exocytosis. May be involved in the regulation of the mobility of KCNB1-containing endocytic vesicles. The polypeptide is Tripartite motif-containing protein 72 (Oryctolagus cuniculus (Rabbit)).